The chain runs to 333 residues: Flotillin-like protein FloA (333 aa).

A helical membrane pass occupies residues 10 to 30; that stretch reads IFLIAGGIIFLVLFFHYVPFF.

It belongs to the flotillin-like FloA family. In terms of assembly, homooligomerizes.

Its subcellular location is the cell membrane. The protein resides in the membrane raft. Functionally, found in functional membrane microdomains (FMM) that may be equivalent to eukaryotic membrane rafts. FMMs are highly dynamic and increase in number as cells age. Flotillins are thought to be important factors in membrane fluidity. This chain is Flotillin-like protein FloA, found in Bacteroides fragilis (strain ATCC 25285 / DSM 2151 / CCUG 4856 / JCM 11019 / LMG 10263 / NCTC 9343 / Onslow / VPI 2553 / EN-2).